The sequence spans 396 residues: Chalcone synthase A (396 aa).

Residue cysteine 170 is part of the active site.

This sequence belongs to the thiolase-like superfamily. Chalcone/stilbene synthases family.

It carries out the reaction (E)-4-coumaroyl-CoA + 3 malonyl-CoA + 3 H(+) = 2',4,4',6'-tetrahydroxychalcone + 3 CO2 + 4 CoA. Its pathway is secondary metabolite biosynthesis; flavonoid biosynthesis. Functionally, the primary product of this enzyme is 4,2',4',6'-tetrahydroxychalcone (also termed naringenin-chalcone or chalcone) which can under specific conditions spontaneously isomerize into naringenin. The protein is Chalcone synthase A (CHSA) of Ipomoea purpurea (Common morning glory).